The primary structure comprises 188 residues: Ribonuclease HII (188 aa).

In terms of domain architecture, RNase H type-2 spans 6–188 (KPLCGIDEAG…VKGLDEPTLF (183 aa)). A divalent metal cation contacts are provided by aspartate 12, glutamate 13, and aspartate 99.

It belongs to the RNase HII family. The cofactor is Mn(2+). Mg(2+) is required as a cofactor.

Its subcellular location is the cytoplasm. The catalysed reaction is Endonucleolytic cleavage to 5'-phosphomonoester.. In terms of biological role, endonuclease that specifically degrades the RNA of RNA-DNA hybrids. The sequence is that of Ribonuclease HII from Sulfurovum sp. (strain NBC37-1).